We begin with the raw amino-acid sequence, 199 residues long: 7-methyl-GTP pyrophosphatase (199 aa).

The active-site Proton acceptor is aspartate 74.

This sequence belongs to the Maf family. YceF subfamily. Requires a divalent metal cation as cofactor.

Its subcellular location is the cytoplasm. The catalysed reaction is N(7)-methyl-GTP + H2O = N(7)-methyl-GMP + diphosphate + H(+). Its function is as follows. Nucleoside triphosphate pyrophosphatase that hydrolyzes 7-methyl-GTP (m(7)GTP). May have a dual role in cell division arrest and in preventing the incorporation of modified nucleotides into cellular nucleic acids. This chain is 7-methyl-GTP pyrophosphatase, found in Cupriavidus pinatubonensis (strain JMP 134 / LMG 1197) (Cupriavidus necator (strain JMP 134)).